A 444-amino-acid chain; its full sequence is Trigger factor (444 aa).

The 86-residue stretch at 160 to 245 (DMQVTFDFEG…VKQVEKPKLP (86 aa)) folds into the PPIase FKBP-type domain.

Belongs to the FKBP-type PPIase family. Tig subfamily.

The protein resides in the cytoplasm. The catalysed reaction is [protein]-peptidylproline (omega=180) = [protein]-peptidylproline (omega=0). Its function is as follows. Involved in protein export. Acts as a chaperone by maintaining the newly synthesized protein in an open conformation. Functions as a peptidyl-prolyl cis-trans isomerase. In Acinetobacter baylyi (strain ATCC 33305 / BD413 / ADP1), this protein is Trigger factor.